The chain runs to 1362 residues: DNA-directed RNA polymerase subunit beta'' (1362 aa).

Zn(2+)-binding residues include cysteine 224, cysteine 295, cysteine 302, and cysteine 305.

Belongs to the RNA polymerase beta' chain family. RpoC2 subfamily. In plastids the minimal PEP RNA polymerase catalytic core is composed of four subunits: alpha, beta, beta', and beta''. When a (nuclear-encoded) sigma factor is associated with the core the holoenzyme is formed, which can initiate transcription. Requires Zn(2+) as cofactor.

The protein localises to the plastid. It is found in the chloroplast. The catalysed reaction is RNA(n) + a ribonucleoside 5'-triphosphate = RNA(n+1) + diphosphate. Functionally, DNA-dependent RNA polymerase catalyzes the transcription of DNA into RNA using the four ribonucleoside triphosphates as substrates. In Helianthus annuus (Common sunflower), this protein is DNA-directed RNA polymerase subunit beta''.